Reading from the N-terminus, the 344-residue chain is tRNA dimethylallyltransferase (344 aa).

ATP is bound at residue 19 to 26 (GPTASGKT). Residue 21–26 (TASGKT) coordinates substrate.

The protein belongs to the IPP transferase family. In terms of assembly, monomer. Mg(2+) serves as cofactor.

The enzyme catalyses adenosine(37) in tRNA + dimethylallyl diphosphate = N(6)-dimethylallyladenosine(37) in tRNA + diphosphate. Catalyzes the transfer of a dimethylallyl group onto the adenine at position 37 in tRNAs that read codons beginning with uridine, leading to the formation of N6-(dimethylallyl)adenosine (i(6)A). This Bifidobacterium animalis subsp. lactis (strain AD011) protein is tRNA dimethylallyltransferase.